The primary structure comprises 469 residues: Citrate synthase, mitochondrial (469 aa).

A mitochondrion-targeting transit peptide spans 1–31 (MTLLTASSRAAARLLGAKNSSCIIFAARHAS). Catalysis depends on residues H304 and H350. Residue R359 coordinates oxaloacetate. Residue D405 is part of the active site. 2 residues coordinate oxaloacetate: R431 and R451.

This sequence belongs to the citrate synthase family. As to quaternary structure, homodimer.

The protein resides in the mitochondrion matrix. It carries out the reaction oxaloacetate + acetyl-CoA + H2O = citrate + CoA + H(+). The protein operates within carbohydrate metabolism; tricarboxylic acid cycle; isocitrate from oxaloacetate: step 1/2. Key enzyme of the Krebs tricarboxylic acid cycle which catalyzes the synthesis of citrate from acetyl coenzyme A and oxaloacetate. In Amblyrhynchus cristatus (Galapagos marine iguana), this protein is Citrate synthase, mitochondrial (CS).